A 450-amino-acid chain; its full sequence is MAVHPIDYRYGSEEMRKIWDEKNKLQKLLDVEAALARAHAKVGNIPEESAKVISERANTKWVKLERVKEIEAEIHHDIMAVVKALSEVCGEHGKYVHLGATSNDIIDTANALLIKESLEIVERDLKELRSILKQLAEKHIGTVCIGRTHGQHAVPTTYGMKFALWLDEIQRHIERLYQLKERVLVGKMRGAVGTAASFGEKAFEIERLVMEDLGLKPARITNQIVQRDVYAELLFFLALVASTLDKMGLEIRNLQRTEILEVSEPFGEKQVGSSTMPHKRNPIRTEKVCGLARVLYSNVIPALLNNPLWHERDLTNSSVERVILPESFVLLDEMLKTMKKVLTGLEFFPENIRRNLYLTKNLIMAEPLMLKLAEKGMGRQEAHEVVRQLAMKAFRENRDLLEVAKESREITKYLTERDLEELKPENYIGKAREIVKKVIEYVEEMERRGL.

N(6)-(1,2-dicarboxyethyl)-AMP-binding positions include 9–10 (RY), 75–77 (HHD), and 101–102 (TS). Histidine 149 (proton donor/acceptor) is an active-site residue. Glutamine 223 serves as a coordination point for N(6)-(1,2-dicarboxyethyl)-AMP. The active-site Proton donor/acceptor is the serine 273. N(6)-(1,2-dicarboxyethyl)-AMP is bound by residues serine 274, 279-281 (KRN), and 318-322 (SVERV).

It belongs to the lyase 1 family. Adenylosuccinate lyase subfamily. Homotetramer. Residues from neighboring subunits contribute catalytic and substrate-binding residues to each active site.

The catalysed reaction is N(6)-(1,2-dicarboxyethyl)-AMP = fumarate + AMP. It carries out the reaction (2S)-2-[5-amino-1-(5-phospho-beta-D-ribosyl)imidazole-4-carboxamido]succinate = 5-amino-1-(5-phospho-beta-D-ribosyl)imidazole-4-carboxamide + fumarate. Its pathway is purine metabolism; AMP biosynthesis via de novo pathway; AMP from IMP: step 2/2. The protein operates within purine metabolism; IMP biosynthesis via de novo pathway; 5-amino-1-(5-phospho-D-ribosyl)imidazole-4-carboxamide from 5-amino-1-(5-phospho-D-ribosyl)imidazole-4-carboxylate: step 2/2. Functionally, catalyzes two reactions in de novo purine nucleotide biosynthesis. Catalyzes the breakdown of 5-aminoimidazole- (N-succinylocarboxamide) ribotide (SAICAR or 2-[5-amino-1-(5-phospho-beta-D-ribosyl)imidazole-4-carboxamido]succinate) to 5-aminoimidazole-4-carboxamide ribotide (AICAR or 5-amino-1-(5-phospho-beta-D-ribosyl)imidazole-4-carboxamide) and fumarate, and of adenylosuccinate (ADS or N(6)-(1,2-dicarboxyethyl)-AMP) to adenosine monophosphate (AMP) and fumarate. In Pyrococcus horikoshii (strain ATCC 700860 / DSM 12428 / JCM 9974 / NBRC 100139 / OT-3), this protein is Adenylosuccinate lyase (purB).